A 204-amino-acid polypeptide reads, in one-letter code: uncharacterized protein (204 aa).

A helical membrane pass occupies residues 160 to 180; the sequence is GLTVAAIASVVVAGAVTYLVV.

It to M.pneumoniae MPN_373 C-terminal region.

The protein localises to the cell membrane. This is an uncharacterized protein from Mycoplasma pneumoniae (strain ATCC 29342 / M129 / Subtype 1) (Mycoplasmoides pneumoniae).